Consider the following 284-residue polypeptide: Capsid assembly scaffolding protein (284 aa).

Active-site residues include Asp19, His48, and Ser107. Positions 206–243 (EAVTAVAEHVQEKLSATEQRLAEMETAFSALKQEVTDR) form a coiled coil. A disordered region spans residues 258-284 (LDHTESLTQQRRSKATGGGGDALMTNC).

Belongs to the P2likevirus scaffolding protein family. Homomultimer. In terms of processing, autocleaves itself into an N-terminal fragment containing the protease activity, that remains in the capsid following maturation.

Functionally, scaffolding protein and protease involved in the icosahedric procapsid assembly. Coassembles with the capsid proteins to form the procapsid, in which the scaffolding protein is found within the external shell of icosahedrally arranged capsid protein subunits. In a subsequent step the scaffolding protein molecules are cleaved by the viral protease activity. The polypeptide is Capsid assembly scaffolding protein (O) (Enterobacteriaceae (Bacteriophage P2)).